A 405-amino-acid polypeptide reads, in one-letter code: Multifunctional CCA protein (405 aa).

G8 and R11 together coordinate ATP. 2 residues coordinate CTP: G8 and R11. Mg(2+) contacts are provided by D21 and D23. Positions 91, 137, and 140 each coordinate ATP. 3 residues coordinate CTP: R91, R137, and R140. Positions T225–L326 constitute an HD domain.

Belongs to the tRNA nucleotidyltransferase/poly(A) polymerase family. Bacterial CCA-adding enzyme type 1 subfamily. In terms of assembly, monomer. Can also form homodimers and oligomers. Mg(2+) serves as cofactor. Ni(2+) is required as a cofactor.

It catalyses the reaction a tRNA precursor + 2 CTP + ATP = a tRNA with a 3' CCA end + 3 diphosphate. The catalysed reaction is a tRNA with a 3' CCA end + 2 CTP + ATP = a tRNA with a 3' CCACCA end + 3 diphosphate. Its function is as follows. Catalyzes the addition and repair of the essential 3'-terminal CCA sequence in tRNAs without using a nucleic acid template. Adds these three nucleotides in the order of C, C, and A to the tRNA nucleotide-73, using CTP and ATP as substrates and producing inorganic pyrophosphate. tRNA 3'-terminal CCA addition is required both for tRNA processing and repair. Also involved in tRNA surveillance by mediating tandem CCA addition to generate a CCACCA at the 3' terminus of unstable tRNAs. While stable tRNAs receive only 3'-terminal CCA, unstable tRNAs are marked with CCACCA and rapidly degraded. This Laribacter hongkongensis (strain HLHK9) protein is Multifunctional CCA protein.